Reading from the N-terminus, the 400-residue chain is Tryptophan--tRNA ligase, cytoplasmic (400 aa).

Residues 95–104 carry the 'HIGH' region motif; it reads PSSGSLHFGH. A 'KMSKS' region motif is present at residues 281–285; that stretch reads KMSAS.

This sequence belongs to the class-I aminoacyl-tRNA synthetase family.

The protein resides in the cytoplasm. The catalysed reaction is tRNA(Trp) + L-tryptophan + ATP = L-tryptophyl-tRNA(Trp) + AMP + diphosphate + H(+). This Dictyostelium discoideum (Social amoeba) protein is Tryptophan--tRNA ligase, cytoplasmic (trpS).